Consider the following 971-residue polypeptide: Reversion-inducing cysteine-rich protein with Kazal motifs (971 aa).

An N-terminal signal peptide occupies residues 1 to 22; it reads MASVRASPRSALLLLLAAAGVA. A Knot 1 repeat occupies 37–84; the sequence is CCNHSKDNQMCRDVCEQIFSSKSESRLKHLLQRAPDYCPETMVEIWSC. The tract at residues 37-338 is 5 X Knot repeats; it reads CCNHSKDNQM…NPVEVSMLTC (302 aa). Residues asparagine 39 and asparagine 86 are each glycosylated (N-linked (GlcNAc...) asparagine). Knot repeat units follow at residues 104–141 and 151–197; these read CCEL…LFSC and CCSY…LIHC. Asparagine 200 is a glycosylation site (N-linked (GlcNAc...) asparagine). Knot repeat units lie at residues 216-263 and 292-338; these read CCDR…LWQC and CCSK…MLTC. Residues asparagine 297 and asparagine 352 are each glycosylated (N-linked (GlcNAc...) asparagine). Kazal-like domains are found at residues 627 to 673, 698 to 752, and 753 to 789; these read TFTG…PCIS, TFDK…PCQP, and FCRA…PCQA. 6 disulfides stabilise this stretch: cysteine 633/cysteine 658, cysteine 635/cysteine 654, cysteine 643/cysteine 671, cysteine 716/cysteine 735, cysteine 724/cysteine 750, and cysteine 761/cysteine 787. The Kazal-like 2; degenerate domain maps to 704-750; it reads CSQYECVPRQLTCDQARDPVCDTDHMEHSNLCTLYQRGKSLSYRGPC. Serine 942 is lipidated: GPI-anchor amidated serine. Positions 943-971 are cleaved as a propeptide — removed in mature form; it reads SAVVGRPLFHSLLLLLSLGLTVHLLWTRP.

The protein belongs to the RECK family. As to quaternary structure, interacts (via knot repeats) with WNT7A (via disordered linker region); the interaction is direct. Interacts (via knot repeats) with WNT7B (via disordered linker region); the interaction is direct. Interacts with ADGRA2; the interaction is direct. Interacts with MMP9.

The protein resides in the cell membrane. Functions together with ADGRA2 to enable brain endothelial cells to selectively respond to Wnt7 signals (WNT7A or WNT7B). Plays a key role in Wnt7-specific responses: required for central nervous system (CNS) angiogenesis and blood-brain barrier regulation. Acts as a Wnt7-specific coactivator of canonical Wnt signaling by decoding Wnt ligands: acts by interacting specifically with the disordered linker region of Wnt7, thereby conferring ligand selectivity for Wnt7. ADGRA2 is then required to deliver RECK-bound Wnt7 to frizzled by assembling a higher-order RECK-ADGRA2-Fzd-LRP5-LRP6 complex. Also acts as a serine protease inhibitor: negatively regulates matrix metalloproteinase-9 (MMP9) by suppressing MMP9 secretion and by direct inhibition of its enzymatic activity. Also inhibits metalloproteinase activity of MMP2 and MMP14 (MT1-MMP). This Mus musculus (Mouse) protein is Reversion-inducing cysteine-rich protein with Kazal motifs.